Reading from the N-terminus, the 431-residue chain is Glutamate-1-semialdehyde 2,1-aminomutase (431 aa).

The residue at position 269 (Lys269) is an N6-(pyridoxal phosphate)lysine.

Belongs to the class-III pyridoxal-phosphate-dependent aminotransferase family. HemL subfamily. As to quaternary structure, homodimer. The cofactor is pyridoxal 5'-phosphate.

It localises to the cytoplasm. It carries out the reaction (S)-4-amino-5-oxopentanoate = 5-aminolevulinate. It participates in porphyrin-containing compound metabolism; protoporphyrin-IX biosynthesis; 5-aminolevulinate from L-glutamyl-tRNA(Glu): step 2/2. The protein operates within porphyrin-containing compound metabolism; chlorophyll biosynthesis. This is Glutamate-1-semialdehyde 2,1-aminomutase from Chlorobium luteolum (strain DSM 273 / BCRC 81028 / 2530) (Pelodictyon luteolum).